Consider the following 582-residue polypeptide: 2-succinyl-5-enolpyruvyl-6-hydroxy-3-cyclohexene-1-carboxylate synthase (582 aa).

The protein belongs to the TPP enzyme family. MenD subfamily. As to quaternary structure, homodimer. Mg(2+) serves as cofactor. Requires Mn(2+) as cofactor. It depends on thiamine diphosphate as a cofactor.

It carries out the reaction isochorismate + 2-oxoglutarate + H(+) = 5-enolpyruvoyl-6-hydroxy-2-succinyl-cyclohex-3-ene-1-carboxylate + CO2. The protein operates within quinol/quinone metabolism; 1,4-dihydroxy-2-naphthoate biosynthesis; 1,4-dihydroxy-2-naphthoate from chorismate: step 2/7. It functions in the pathway cofactor biosynthesis; phylloquinone biosynthesis. Functionally, catalyzes the thiamine diphosphate-dependent decarboxylation of 2-oxoglutarate and the subsequent addition of the resulting succinic semialdehyde-thiamine pyrophosphate anion to isochorismate to yield 2-succinyl-5-enolpyruvyl-6-hydroxy-3-cyclohexene-1-carboxylate (SEPHCHC). This Prochlorococcus marinus (strain MIT 9313) protein is 2-succinyl-5-enolpyruvyl-6-hydroxy-3-cyclohexene-1-carboxylate synthase.